The following is a 462-amino-acid chain: Cleavage and polyadenylation specificity factor subunit 7 (462 aa).

Disordered stretches follow at residues 34 to 68 (VLTA…NKTP) and 161 to 213 (TRQN…PSVL). A compositionally biased stretch (pro residues) spans 50–62 (EPPPPVRQEPAPK). An RRM domain is found at 82 to 162 (AAVYVGSFSW…EKVDVRPATR (81 aa)). Residues 181–190 (HSRDSSDSAD) show a composition bias toward basic and acidic residues. A Phosphothreonine modification is found at threonine 194. Serine 196 carries the post-translational modification Phosphoserine. Residue lysine 345 forms a Glycyl lysine isopeptide (Lys-Gly) (interchain with G-Cter in SUMO2) linkage. The segment at 400–462 (SVGASGSSSR…HRDRERDRHH (63 aa)) is disordered. A phosphoserine mark is found at serine 404 and serine 414. Positions 409-460 (RKRHRSRERSPSRSRESSRRHRDLLHNEDRHDDYFQERNREHERHRDRERDR) are arg/Ser-rich domain. Composition is skewed to basic and acidic residues over residues 416–425 (ERSPSRSRES) and 432–462 (LLHN…DRHH).

It belongs to the RRM CPSF6/7 family. In terms of assembly, component of the cleavage factor Im (CFIm) complex which is a heterotetramer composed of two subunits of NUDT21/CPSF5 and two subunits of CPSF6 or CPSF7 or a heterodimer of CPSF6 and CPSF7. The cleavage factor Im (CFIm) complex associates with the CPSF and CSTF complexes to promote the assembly of the core mRNA 3'-processing machinery. Interacts with NUDT21/CPSF5. Interacts (via Arg/Ser-rich domain) with FIP1L1 (preferentially via unphosphorylated form and Arg/Glu/Asp-rich region); this interaction mediates, at least in part, the interaction between the CFIm and CPSF complexes and may be inhibited by CPSF7 hyper-phosphorylation. Post-translationally, phosphorylated. Asymmetrically dimethylated on arginine residues by PRMT1.

It is found in the nucleus. Its subcellular location is the cytoplasm. In terms of biological role, component of the cleavage factor Im (CFIm) complex that functions as an activator of the pre-mRNA 3'-end cleavage and polyadenylation processing required for the maturation of pre-mRNA into functional mRNAs. CFIm contributes to the recruitment of multiprotein complexes on specific sequences on the pre-mRNA 3'-end, so called cleavage and polyadenylation signals (pA signals). Most pre-mRNAs contain multiple pA signals, resulting in alternative cleavage and polyadenylation (APA) producing mRNAs with variable 3'-end formation. The CFIm complex acts as a key regulator of cleavage and polyadenylation site choice during APA through its binding to 5'-UGUA-3' elements localized in the 3'-untranslated region (UTR) for a huge number of pre-mRNAs. CPSF7 activates directly the mRNA 3'-processing machinery. Binds to pA signals in RNA substrates. In Rattus norvegicus (Rat), this protein is Cleavage and polyadenylation specificity factor subunit 7.